Reading from the N-terminus, the 363-residue chain is MNTWFLNVVDPLHQWFLGFGDIGVVLWTVLKILMIAIPLIVSVAFYVVWERKLIGWMHVRHGPMYVGMGLFQAFADVFKLLFKEVLYPSKAHKAIFVIAPLLTLAPSFAAWAVVPFDTKLVLSNANVGLLYLLAMTSLGVYGIILAGWASNSKYAFLGAMRSAAQVVSYEIAMGFALVGVMIAAGSLNLSQIVMAQAGSSGFFDWFLIPLFPLFIVYWVSGVAETNRSPFDVVEGESEIVAGHMVEYSGSVFALFFLAEYANMILVSFLISIFFLGGWLSPIQGWVSGQVSPLIDWVWNGGWPWLLFKVLFFASAYIWFRASFPRYRYDQIMRLGWKVFIPLTIVWIAVTALMVFSGVIQKGV.

The next 9 membrane-spanning stretches (helical) occupy residues 62–82 (GPMY…KLLF), 94–114 (AIFV…WAVV), 127–147 (VGLL…ILAG), 166–186 (VVSY…AAGS), 202–222 (FFDW…VSGV), 239–257 (IVAG…LFFL), 264–286 (ILVS…QGWV), 293–313 (LIDW…LFFA), and 339–359 (FIPL…SGVI).

Belongs to the complex I subunit 1 family. In terms of assembly, NDH-1 is composed of 14 different subunits. Subunits NuoA, H, J, K, L, M, N constitute the membrane sector of the complex.

The protein localises to the cell inner membrane. It carries out the reaction a quinone + NADH + 5 H(+)(in) = a quinol + NAD(+) + 4 H(+)(out). Its function is as follows. NDH-1 shuttles electrons from NADH, via FMN and iron-sulfur (Fe-S) centers, to quinones in the respiratory chain. The immediate electron acceptor for the enzyme in this species is believed to be ubiquinone. Couples the redox reaction to proton translocation (for every two electrons transferred, four hydrogen ions are translocated across the cytoplasmic membrane), and thus conserves the redox energy in a proton gradient. This subunit may bind ubiquinone. The sequence is that of NADH-quinone oxidoreductase subunit H from Xylella fastidiosa (strain 9a5c).